Consider the following 172-residue polypeptide: Ribosome maturation factor RimM (172 aa).

Positions 95–168 constitute a PRC barrel domain; it reads AEGEFYYHQI…RVDVEIMEGL (74 aa).

The protein belongs to the RimM family. Binds ribosomal protein uS19.

Its subcellular location is the cytoplasm. Its function is as follows. An accessory protein needed during the final step in the assembly of 30S ribosomal subunit, possibly for assembly of the head region. Essential for efficient processing of 16S rRNA. May be needed both before and after RbfA during the maturation of 16S rRNA. It has affinity for free ribosomal 30S subunits but not for 70S ribosomes. The chain is Ribosome maturation factor RimM from Streptococcus equi subsp. zooepidemicus (strain MGCS10565).